The sequence spans 506 residues: Maturase K (506 aa).

It belongs to the intron maturase 2 family. MatK subfamily.

The protein localises to the plastid. The protein resides in the chloroplast. Its function is as follows. Usually encoded in the trnK tRNA gene intron. Probably assists in splicing its own and other chloroplast group II introns. In Uncarina grandidieri (Mouse trap tree), this protein is Maturase K.